The following is a 286-amino-acid chain: MSGKEESSNYAATAEEEAVNQGFVLPEGKIMPNTVFVGGIDITMDEIEIRDFFTRFGNVKEVKIITDRTGVSKGYGFISFSDEVDIQKIVKSQISFHGKKLKLGPAIRKICTYVQPRPVVLSHPTPFHHAWNNQNADSYIQHSPIVSPITQYVQACPYPSSPPMAIQQIPVGCQQPGYFQVSPQWPADQRSYMFPTPAFTFNYHCCDMDPNGGEPIPREYPIDQTVSASGANPQKRYVEMSTQTIVSCLFDPANKFHSFVSQEDYLKDNRVHHLRRRESVIKRVSK.

The RRM domain maps to 33 to 114 (NTVFVGGIDI…PAIRKICTYV (82 aa)). Residues 155–180 (ACPYPSSPPMAIQQIPVGCQQPGYFQ) form the DAZ domain.

This sequence belongs to the RRM DAZ family. As to quaternary structure, interacts with the C-terminus of pabp1 and with epabp. Prior to oocyte maturation, found in a complex with epabp and pum2 proteins and spdy1 mRNA; pum2 dissociates from the complex during maturation.

Its subcellular location is the cytoplasm. Its function is as follows. RNA-binding protein that is required for primordial germ cell (PGC) differentiation and indirectly necessary for the migration of PGCs through the endoderm. May promote meiotic cell division during spermatogenesis. Shows a preference for G- and U-rich RNAs and probably binds the 3'-UTR of target mRNAs. Stimulates the initiation of translation of mRNAs through the recruitment of poly(A)-binding proteins (PABPs). The sequence is that of Deleted in azoospermia-like-B (dazl-b) from Xenopus laevis (African clawed frog).